The sequence spans 180 residues: Shikimate kinase (180 aa).

14-19 (GAGKSC) contributes to the ATP binding site. Ser18 contacts Mg(2+). Substrate-binding residues include Asp36, Arg60, and Gly82. Arg120 provides a ligand contact to ATP. Arg139 contacts substrate.

It belongs to the shikimate kinase family. Monomer. Mg(2+) is required as a cofactor.

The protein resides in the cytoplasm. The enzyme catalyses shikimate + ATP = 3-phosphoshikimate + ADP + H(+). It participates in metabolic intermediate biosynthesis; chorismate biosynthesis; chorismate from D-erythrose 4-phosphate and phosphoenolpyruvate: step 5/7. Catalyzes the specific phosphorylation of the 3-hydroxyl group of shikimic acid using ATP as a cosubstrate. The polypeptide is Shikimate kinase (Xanthomonas campestris pv. campestris (strain 8004)).